The chain runs to 460 residues: V-type ATP synthase beta chain 2 (460 aa).

The protein belongs to the ATPase alpha/beta chains family.

Produces ATP from ADP in the presence of a proton gradient across the membrane. The V-type beta chain is a regulatory subunit. The sequence is that of V-type ATP synthase beta chain 2 from Clostridium tetani (strain Massachusetts / E88).